We begin with the raw amino-acid sequence, 145 residues long: D-aminoacyl-tRNA deacylase (145 aa).

The Gly-cisPro motif, important for rejection of L-amino acids signature appears at 137-138; the sequence is GP.

It belongs to the DTD family. Homodimer.

It is found in the cytoplasm. It catalyses the reaction glycyl-tRNA(Ala) + H2O = tRNA(Ala) + glycine + H(+). It carries out the reaction a D-aminoacyl-tRNA + H2O = a tRNA + a D-alpha-amino acid + H(+). An aminoacyl-tRNA editing enzyme that deacylates mischarged D-aminoacyl-tRNAs. Also deacylates mischarged glycyl-tRNA(Ala), protecting cells against glycine mischarging by AlaRS. Acts via tRNA-based rather than protein-based catalysis; rejects L-amino acids rather than detecting D-amino acids in the active site. By recycling D-aminoacyl-tRNA to D-amino acids and free tRNA molecules, this enzyme counteracts the toxicity associated with the formation of D-aminoacyl-tRNA entities in vivo and helps enforce protein L-homochirality. The protein is D-aminoacyl-tRNA deacylase of Rhodococcus jostii (strain RHA1).